Here is a 509-residue protein sequence, read N- to C-terminus: Dihydrolipoyl dehydrogenase, mitochondrial (509 aa).

A mitochondrion-targeting transit peptide spans 1–35; that stretch reads MQSWSRVYRSLAKKGHFNRISHGLQGVSSVPLRTY. At lysine 66 the chain carries N6-acetyllysine; alternate. Lysine 66 carries the post-translational modification N6-succinyllysine; alternate. Residues 71 to 80 and lysine 89 each bind FAD; that span reads EKNETLGGTC. A disulfide bridge connects residues cysteine 80 and cysteine 85. An N6-acetyllysine; alternate mark is found at lysine 104, lysine 122, lysine 132, and lysine 143. N6-succinyllysine; alternate occurs at positions 104, 122, 132, and 143. Position 154 (glycine 154) interacts with FAD. Lysine 159 and lysine 166 each carry N6-succinyllysine. FAD is bound at residue 183 to 185; the sequence is TGS. NAD(+) contacts are provided by residues 220–227 and glutamate 243; that span reads GAGVIGVE. Residues lysine 273 and lysine 277 each carry the N6-succinyllysine modification. Valine 278 provides a ligand contact to NAD(+). Residues serine 285 and serine 297 each carry the phosphoserine modification. Glycine 314 provides a ligand contact to NAD(+). Lysine 334 bears the N6-acetyllysine; alternate mark. Lysine 334 carries the post-translational modification N6-succinyllysine; alternate. N6-acetyllysine is present on lysine 346. Residues aspartate 355 and 361–364 each bind FAD; that span reads MLAH. Residue lysine 410 is modified to N6-acetyllysine; alternate. Lysine 410 carries the post-translational modification N6-succinyllysine; alternate. N6-acetyllysine occurs at positions 417 and 420. The residue at position 430 (lysine 430) is an N6-succinyllysine. Catalysis depends on histidine 487, which acts as the Proton acceptor. Lysine 505 is subject to N6-acetyllysine; alternate. Lysine 505 carries the post-translational modification N6-succinyllysine; alternate.

This sequence belongs to the class-I pyridine nucleotide-disulfide oxidoreductase family. Homodimer. Part of the multimeric pyruvate dehydrogenase complex that contains multiple copies of pyruvate dehydrogenase (subunits PDHA (PDHA1 or PDHA2) and PDHB, E1), dihydrolipoamide acetyltransferase (DLAT, E2) and lipoamide dehydrogenase (DLD, E3). These subunits are bound to an inner core composed of about 48 DLAT and 12 PDHX molecules (by non covalent bonds). The 2-oxoglutarate dehydrogenase complex is composed of OGDH (2-oxoglutarate dehydrogenase; E1), DLST (dihydrolipoamide succinyltransferase; E2), DLD (dihydrolipoamide dehydrogenase; E3) and the assembly factor KGD4. It contains multiple copies of the three enzymatic components (E1, E2 and E3). In the nucleus, the 2-oxoglutarate dehydrogenase complex associates with KAT2A. Interacts with PDHX. It depends on FAD as a cofactor. Tyrosine phosphorylated. Expressed in liver (at protein level).

The protein localises to the mitochondrion matrix. It localises to the nucleus. It is found in the cell projection. The protein resides in the cilium. Its subcellular location is the flagellum. The protein localises to the cytoplasmic vesicle. It localises to the secretory vesicle. It is found in the acrosome. The enzyme catalyses N(6)-[(R)-dihydrolipoyl]-L-lysyl-[protein] + NAD(+) = N(6)-[(R)-lipoyl]-L-lysyl-[protein] + NADH + H(+). Its function is as follows. Lipoamide dehydrogenase is a component of the glycine cleavage system as well as an E3 component of three alpha-ketoacid dehydrogenase complexes (pyruvate-, alpha-ketoglutarate-, and branched-chain amino acid-dehydrogenase complex). The 2-oxoglutarate dehydrogenase complex is mainly active in the mitochondrion. A fraction of the 2-oxoglutarate dehydrogenase complex also localizes in the nucleus and is required for lysine succinylation of histones: associates with KAT2A on chromatin and provides succinyl-CoA to histone succinyltransferase KAT2A. In monomeric form may have additional moonlighting function as serine protease. Involved in the hyperactivation of spermatazoa during capacitation and in the spermatazoal acrosome reaction. This chain is Dihydrolipoyl dehydrogenase, mitochondrial (Dld), found in Mus musculus (Mouse).